Here is a 151-residue protein sequence, read N- to C-terminus: Small ribosomal subunit protein uS13 (151 aa).

This sequence belongs to the universal ribosomal protein uS13 family. As to quaternary structure, part of the 30S ribosomal subunit. Forms a loose heterodimer with protein S19. Forms two bridges to the 50S subunit in the 70S ribosome.

Its function is as follows. Located at the top of the head of the 30S subunit, it contacts several helices of the 16S rRNA. In the 70S ribosome it contacts the 23S rRNA (bridge B1a) and protein L5 of the 50S subunit (bridge B1b), connecting the 2 subunits; these bridges are implicated in subunit movement. The chain is Small ribosomal subunit protein uS13 from Staphylothermus marinus (strain ATCC 43588 / DSM 3639 / JCM 9404 / F1).